A 587-amino-acid chain; its full sequence is Beta-(1--&gt;2)glucan export ATP-binding/permease protein NdvA (587 aa).

The region spanning 21–301 is the ABC transmembrane type-1 domain; sequence VSLVVVANIV…MRQFATQIFE (281 aa). 6 consecutive transmembrane segments (helical) span residues 23 to 43, 57 to 77, 128 to 148, 158 to 178, 248 to 268, and 272 to 292; these read LVVV…ILFG, PILF…VLVA, GLWL…ALLI, LSAV…VVMS, MAST…VQAG, and VGDV…LDLM. Positions 335–569 constitute an ABC transporter domain; that stretch reads IEFRDVSFGF…NGRFAALLRA (235 aa). 368–375 provides a ligand contact to ATP; sequence GPTGAGKT.

Belongs to the ABC transporter superfamily. Beta-(1--&gt;2)glucan exporter (TC 3.A.1.108.1) family. In terms of assembly, homodimer.

The protein resides in the cell inner membrane. It catalyses the reaction [(1-&gt;2)-beta-D-glucosyl](n)(in) + ATP + H2O = [(1-&gt;2)-beta-D-glucosyl](n)(out) + ADP + phosphate + H(+). Its function is as follows. Involved in beta-(1--&gt;2)glucan export. Transmembrane domains (TMD) form a pore in the inner membrane and the ATP-binding domain (NBD) is responsible for energy generation. The polypeptide is Beta-(1--&gt;2)glucan export ATP-binding/permease protein NdvA (Rhizobium johnstonii (strain DSM 114642 / LMG 32736 / 3841) (Rhizobium leguminosarum bv. viciae)).